The chain runs to 121 residues: NAD(P)H-quinone oxidoreductase subunit 3, chloroplastic (121 aa).

A run of 3 helical transmembrane segments spans residues 10–30 (FWAF…VSNL), 65–85 (MFAL…PWAM), and 90–110 (LGII…IGLI).

It belongs to the complex I subunit 3 family. NDH is composed of at least 16 different subunits, 5 of which are encoded in the nucleus.

Its subcellular location is the plastid. The protein resides in the chloroplast thylakoid membrane. The catalysed reaction is a plastoquinone + NADH + (n+1) H(+)(in) = a plastoquinol + NAD(+) + n H(+)(out). It catalyses the reaction a plastoquinone + NADPH + (n+1) H(+)(in) = a plastoquinol + NADP(+) + n H(+)(out). NDH shuttles electrons from NAD(P)H:plastoquinone, via FMN and iron-sulfur (Fe-S) centers, to quinones in the photosynthetic chain and possibly in a chloroplast respiratory chain. The immediate electron acceptor for the enzyme in this species is believed to be plastoquinone. Couples the redox reaction to proton translocation, and thus conserves the redox energy in a proton gradient. The chain is NAD(P)H-quinone oxidoreductase subunit 3, chloroplastic from Staurastrum punctulatum (Green alga).